The chain runs to 1464 residues: DNA-directed RNA polymerase subunit beta' (1464 aa).

Positions 66, 68, 96, and 99 each coordinate Zn(2+). Mg(2+)-binding residues include Asp-491, Asp-493, and Asp-495. Residues Cys-838, Cys-912, Cys-919, and Cys-922 each coordinate Zn(2+). The segment covering 1143 to 1200 (NDDDDDDYYDSDYYDYYDYSDDDDDYDDYDDYYYNYDDDENDNDNDYDYDYDYDYDYD) has biased composition (acidic residues). The disordered stretch occupies residues 1143–1229 (NDDDDDDYYD…YDYDYDSDSD (87 aa)). The span at 1204-1219 (HNSYSHNSYSPSSNDN) shows a compositional bias: low complexity. Positions 1220-1229 (YDYDYDSDSD) are enriched in acidic residues.

It belongs to the RNA polymerase beta' chain family. In terms of assembly, the RNAP catalytic core consists of 2 alpha, 1 beta, 1 beta' and 1 omega subunit. When a sigma factor is associated with the core the holoenzyme is formed, which can initiate transcription. Mg(2+) is required as a cofactor. Requires Zn(2+) as cofactor.

It catalyses the reaction RNA(n) + a ribonucleoside 5'-triphosphate = RNA(n+1) + diphosphate. Its function is as follows. DNA-dependent RNA polymerase catalyzes the transcription of DNA into RNA using the four ribonucleoside triphosphates as substrates. The sequence is that of DNA-directed RNA polymerase subunit beta' from Karelsulcia muelleri (strain GWSS) (Sulcia muelleri).